Here is a 474-residue protein sequence, read N- to C-terminus: Rhodanese-like domain-containing protein 7 (474 aa).

2 disordered regions span residues 20–68 (SSPP…SSLK) and 179–198 (VSPEQEAIHHGHSSSSPLAA). Positions 53 to 68 (QSQPHKLSSSPSSSLK) are enriched in low complexity. Residues 245-368 (SDPETVVIDV…YLEEVPKTES (124 aa)) form the Rhodanese domain. C328 serves as the catalytic Cysteine persulfide intermediate. Positions 432–474 (RARARQTQFEEWGVIGGPDKGRRPATKPDSPRKKINAKLGSSI) are disordered.

The protein is Rhodanese-like domain-containing protein 7 (STR7) of Arabidopsis thaliana (Mouse-ear cress).